We begin with the raw amino-acid sequence, 205 residues long: Small ribosomal subunit protein uS4 (205 aa).

Positions 93-171 constitute an S4 RNA-binding domain; it reads SRVSSVLYRS…SPHYLEVDRE (79 aa).

The protein belongs to the universal ribosomal protein uS4 family. Part of the 30S ribosomal subunit. Contacts protein S5. The interaction surface between S4 and S5 is involved in control of translational fidelity.

Functionally, one of the primary rRNA binding proteins, it binds directly to 16S rRNA where it nucleates assembly of the body of the 30S subunit. With S5 and S12 plays an important role in translational accuracy. In Neorickettsia sennetsu (strain ATCC VR-367 / Miyayama) (Ehrlichia sennetsu), this protein is Small ribosomal subunit protein uS4.